A 262-amino-acid polypeptide reads, in one-letter code: Thiazole synthase (262 aa).

The active-site Schiff-base intermediate with DXP is K105. 1-deoxy-D-xylulose 5-phosphate contacts are provided by residues G166, 192–193, and 214–215; these read AG and NT.

It belongs to the ThiG family. In terms of assembly, homotetramer. Forms heterodimers with either ThiH or ThiS.

The protein resides in the cytoplasm. It carries out the reaction [ThiS sulfur-carrier protein]-C-terminal-Gly-aminoethanethioate + 2-iminoacetate + 1-deoxy-D-xylulose 5-phosphate = [ThiS sulfur-carrier protein]-C-terminal Gly-Gly + 2-[(2R,5Z)-2-carboxy-4-methylthiazol-5(2H)-ylidene]ethyl phosphate + 2 H2O + H(+). The protein operates within cofactor biosynthesis; thiamine diphosphate biosynthesis. Catalyzes the rearrangement of 1-deoxy-D-xylulose 5-phosphate (DXP) to produce the thiazole phosphate moiety of thiamine. Sulfur is provided by the thiocarboxylate moiety of the carrier protein ThiS. In vitro, sulfur can be provided by H(2)S. This Phenylobacterium zucineum (strain HLK1) protein is Thiazole synthase.